Reading from the N-terminus, the 745-residue chain is MQRDYLIRVETESMPDFKRLNGLMIGFVIKGEAHIYDENNMTQCNSGDIFIINHRDLYRFQLQQDGIICYIQFQMKYLADKFDDAHCLYFHLTDATTTKNIHQLRNIMARLVSTHIRHNELSKLTEQQLVIQLLMHMIHYVPRTYHSNQSILNDDKVNQVCDYIELHFHEDLSLSELSEYVGWSESHLSKKFTESLGVGFQHFLNTTRIEHAKLDLTYTDETITDIALQNGFSSAASFARTFKHFTHQTPKQYRGDRPAITENQQSAQHNYHDRELILLLNDYIEEMNHFIEDIEKMNYKEIAFKPTNQQLNQFNHIIQVGYLRNLLNTQYQSQLLTCHHDFQVNEVLAYDVMPYIMKKLNAPFTYDAEISNIFYDIDLCLDFLLDHNFSLTMHLNQYDSRDYIDAFKVFIHHVALHVSHRKDLKFNLYVTTLHTSLIEMIDYFKALFPNGGLYIHLDQATERHLPLLKRLEPHINHFVFDANSNDAVDFNKMNDDEFKTASQMIINKTNYLIDLMHRHNLKRPLILLNWNTLTGDTFITNGEYFRGGIIIEQLLKLSTKVEGIGYWLNYDLHVSHCRNERDYMNSIELFHQYNGKRPVYFTALLFNKLTSNILYSDDTCIVTGTDSNFQILLYDAKHFNPYLALDNQMNMRATEMIHLNINALEDGMYKIKHFTLDKENGALFNLWRKHHTIHGMDKDSIDYVNRMSFPKLEVYDIDITDTLALNIKMITNGIHLIEVKRYPSS.

The 99-residue stretch at 158–256 (NQVCDYIELH…HQTPKQYRGD (99 aa)) folds into the HTH araC/xylS-type domain. 2 DNA-binding regions (H-T-H motif) span residues 175–196 (SELS…TESL) and 223–246 (ITDI…KHFT).

This is an uncharacterized protein from Staphylococcus aureus (strain Mu50 / ATCC 700699).